A 1202-amino-acid polypeptide reads, in one-letter code: Voltage-gated inwardly rectifying potassium channel KCNH6 (1202 aa).

The Cytoplasmic portion of the chain corresponds to 1-405 (MGSAALPHAR…YSPFKAVWDW (405 aa)). The 49-residue stretch at 36–84 (IIYCNDGFCEMFGYSRVEVMQRPCTCDFLTGPDTTKSSIAQLTQALLGS) folds into the PAS domain. One can recognise a PAC domain in the interval 87–139 (CKLEILYYRKDTSCFRCLVDVVPVKNEDGVVIMFILNFEDLAQLIAKSSGRSL). 2 disordered regions span residues 203 to 243 (ENCV…LGPR) and 285 to 315 (ERRANSEGGMGLSGKASHVKPNPPNSTSDSD). A compositionally biased stretch (basic and acidic residues) spans 213–222 (LLEKERRPSL). A helical membrane pass occupies residues 406–426 (LILLLVIYTAVFTPYSAAFLL). Residues 427–443 (NEEQGEEKHWNCSYSCD) lie on the Extracellular side of the membrane. The N-linked (GlcNAc...) asparagine glycan is linked to N437. A helical membrane pass occupies residues 444–464 (PLNIIDLIVDIMFIVDIVINF). Topologically, residues 465–485 (RTTYVNINDEVVSHPGKIAIH) are cytoplasmic. Residues 486-506 (YFKGWFLIDMVAAIPFDLLIF) traverse the membrane as a helical segment. Topologically, residues 507–515 (RSGSDETTT) are extracellular. Residues 516–536 (LIGLLKTARLLRLVRVARKLD) form a helical; Voltage-sensor membrane-spanning segment. The Cytoplasmic portion of the chain corresponds to 537–543 (RYSEYGA). Residues 544 to 564 (AVLFLLMCTFALIAHWLACIW) traverse the membrane as a helical segment. At 565 to 608 (YAIGNVERPYMEHKIGWLDNLGDQIGKRYNDSDLSSGPSIKDKY) the chain is on the extracellular side. N-linked (GlcNAc...) asparagine glycosylation is present at N594. Residues 609–629 (VTALYFTFSSLTSVGFGNVSP) constitute an intramembrane region (pore-forming). The Selectivity filter signature appears at 621–626 (SVGFGN). The Extracellular portion of the chain corresponds to 630–635 (NTNSEK). The helical transmembrane segment at 636 to 656 (IFSICVMLIGSLMYASIFGNV) threads the bilayer. The Cytoplasmic portion of the chain corresponds to 657–1202 (SAIIQRLYSG…HLSDPVLPGS (546 aa)). Residues 739–839 (AFRGASKGCL…IQREDLLEVL (101 aa)) are cNMP-binding domain. Disordered stretches follow at residues 912-948 (LTNPQDPLSKDQWDDVGSSTTPCSQTSDDEAKPGSPT), 1092-1112 (TPCAPLEDEQQTAPGQSPSYA), and 1140-1202 (TVYS…LPGS). The segment covering 928-937 (GSSTTPCSQT) has biased composition (polar residues). Residues 1179 to 1195 (EHLEASSEHQDIQRHLS) show a composition bias toward basic and acidic residues.

It belongs to the potassium channel family. H (Eag) (TC 1.A.1.20) subfamily. Kv11.2/KCNH6 sub-subfamily. The potassium channel is probably composed of a homo- or heterotetrameric complex of pore-forming alpha subunits that can associate only within their subfamily.

The protein localises to the cell membrane. The enzyme catalyses K(+)(in) = K(+)(out). Its function is as follows. Pore-forming (alpha) subunit of voltage-gated inwardly rectifying potassium channel. Characterized by unusual gating kinetics by producing relatively small outward currents during membrane depolarization and large inward currents during subsequent repolarization which reflect a rapid inactivation during depolarization and quick recovery from inactivation but slow deactivation (closing) during repolarization. Activates even more slowly than KCNH2. The chain is Voltage-gated inwardly rectifying potassium channel KCNH6 from Gallus gallus (Chicken).